Reading from the N-terminus, the 227-residue chain is Flagellar L-ring protein (227 aa).

A signal peptide spans 1–15 (MRTWAVLPILLMLVG). Cys-16 carries N-palmitoyl cysteine lipidation. Cys-16 carries S-diacylglycerol cysteine lipidation.

This sequence belongs to the FlgH family. As to quaternary structure, the basal body constitutes a major portion of the flagellar organelle and consists of four rings (L,P,S, and M) mounted on a central rod.

Its subcellular location is the cell outer membrane. The protein localises to the bacterial flagellum basal body. In terms of biological role, assembles around the rod to form the L-ring and probably protects the motor/basal body from shearing forces during rotation. The polypeptide is Flagellar L-ring protein (Syntrophotalea carbinolica (strain DSM 2380 / NBRC 103641 / GraBd1) (Pelobacter carbinolicus)).